The following is a 51-amino-acid chain: Putative antitoxin VapB6 (51 aa).

Antitoxin component of a possible type II toxin-antitoxin (TA) system. The cognate toxin is VapC6. The polypeptide is Putative antitoxin VapB6 (vapB6) (Mycobacterium tuberculosis (strain CDC 1551 / Oshkosh)).